The primary structure comprises 535 residues: MSTKYIFVTGGGTSSMGKGIVAASLGRLLKNRGLKVTVQKFDPYLNIDPGTMSPYQHGEVFVTDDGAETDLDLGHYERFIDINLNKYSNVTSGKVYSEILRKERKGEYLGATVQMVPHVTNMLKEKIKRAATTTDADIIITEVGGTVGDMESLPFIEALRQMKAEVGADNVMYIHTVPILHLRAAGELKTKIAQNATKTLREYGIQANMLVLRSEVPITTEMRDKIAMFCDVAPEAVIQSLDVEHLYQIPLNLQAQNMDQIVCDHLKLDAPKADMTEWSAMVDHVMNLKKKVKIALVGKYVELPDAYISVTEALKHAGYSSDAEVDINWVNANDVTDENVAELVGDAAGIIVPGGFGHRGTEGKIAAIKYARENDVPMLGICLGMQLTAVEFARNVLGLEGAHSFELDPETKYPVIDIMRDQVDVEDMGGTLRLGLYPAKLKNGSRAKAAYNDAEVVQRRHRHRYEFNNKFREDFEKAGFVFSGVSPDNRLVEIVELSDKKFFVACQYHPELQSRPNRPEELYTEFIRVAVENSK.

The tract at residues 1 to 268 (MSTKYIFVTG…DQIVCDHLKL (268 aa)) is amidoligase domain. Ser-14 provides a ligand contact to CTP. Ser-14 contributes to the UTP binding site. Position 15-20 (15-20 (SMGKGI)) interacts with ATP. Residue Tyr-55 participates in L-glutamine binding. ATP is bound at residue Asp-72. 2 residues coordinate Mg(2+): Asp-72 and Glu-142. CTP is bound by residues 149–151 (DME), 189–194 (KTKIAQ), and Lys-225. Residues 189–194 (KTKIAQ) and Lys-225 each bind UTP. The 243-residue stretch at 293–535 (KIALVGKYVE…FIRVAVENSK (243 aa)) folds into the Glutamine amidotransferase type-1 domain. An L-glutamine-binding site is contributed by Gly-355. Residue Cys-382 is the Nucleophile; for glutamine hydrolysis of the active site. L-glutamine is bound by residues 383 to 386 (LGMQ), Glu-406, and Arg-464. Catalysis depends on residues His-509 and Glu-511.

This sequence belongs to the CTP synthase family. Homotetramer.

It carries out the reaction UTP + L-glutamine + ATP + H2O = CTP + L-glutamate + ADP + phosphate + 2 H(+). The enzyme catalyses L-glutamine + H2O = L-glutamate + NH4(+). It catalyses the reaction UTP + NH4(+) + ATP = CTP + ADP + phosphate + 2 H(+). The protein operates within pyrimidine metabolism; CTP biosynthesis via de novo pathway; CTP from UDP: step 2/2. Its activity is regulated as follows. Allosterically activated by GTP, when glutamine is the substrate; GTP has no effect on the reaction when ammonia is the substrate. The allosteric effector GTP functions by stabilizing the protein conformation that binds the tetrahedral intermediate(s) formed during glutamine hydrolysis. Inhibited by the product CTP, via allosteric rather than competitive inhibition. In terms of biological role, catalyzes the ATP-dependent amination of UTP to CTP with either L-glutamine or ammonia as the source of nitrogen. Regulates intracellular CTP levels through interactions with the four ribonucleotide triphosphates. In Lactococcus lactis subsp. lactis (strain IL1403) (Streptococcus lactis), this protein is CTP synthase.